The chain runs to 218 residues: MAGYKADDEYDYLFKLVLIGDSGVGKSNLLSRFTRNEFNLESKSTIGVEFATKSLNIDGKVIKAQIWDTAGQERYRAITSAYYRGAVGALLVYDVTRSTTFETAGRWLKELRDHTDPNIVVMLIGNKSDLRHLVTVSTEDGKAFAEKESLYFMETSALEATNVENAFSEVLTQIYRIVSKRAVEAGDRPSTSVVPSQGQTINVNEDSSVLNRYRCCSN.

20–27 is a GTP binding site; the sequence is GDSGVGKS. Positions 42 to 50 match the Effector region motif; the sequence is SKSTIGVEF. GTP is bound by residues 68–72 and 126–129; these read DTAGQ and NKSD. S-geranylgeranyl cysteine attachment occurs at residues Cys-215 and Cys-216.

It belongs to the small GTPase superfamily. Rab family.

Its subcellular location is the cell membrane. In Lotus japonicus (Lotus corniculatus var. japonicus), this protein is Ras-related protein Rab11E (RAB11E).